The primary structure comprises 111 residues: Cell division protein FtsL (111 aa).

The Cytoplasmic segment spans residues 1 to 26 (MAQARTEFSKVAAPRKLEEMYAQRGD). The helical transmembrane segment at 27–47 (LFPYLLAVLVLLTLVSVFHVW) threads the bilayer. Topologically, residues 48 to 111 (SRVRVVDLNL…PTDQQVVVVK (64 aa)) are periplasmic. A coiled-coil region spans residues 51-85 (RVVDLNLEVAEVARQLKVAQEEQNRLKLEVASLKT).

This sequence belongs to the FtsL family.

The protein resides in the cell inner membrane. In terms of biological role, essential cell division protein. In Geobacter sulfurreducens (strain ATCC 51573 / DSM 12127 / PCA), this protein is Cell division protein FtsL.